We begin with the raw amino-acid sequence, 163 residues long: Ureidoglycolate lyase (163 aa).

Belongs to the ureidoglycolate lyase family. As to quaternary structure, homodimer. Requires Ni(2+) as cofactor.

The enzyme catalyses (S)-ureidoglycolate = urea + glyoxylate. The protein operates within nitrogen metabolism; (S)-allantoin degradation. Its function is as follows. Catalyzes the catabolism of the allantoin degradation intermediate (S)-ureidoglycolate, generating urea and glyoxylate. Involved in the utilization of allantoin as nitrogen source. The polypeptide is Ureidoglycolate lyase (Mesorhizobium japonicum (strain LMG 29417 / CECT 9101 / MAFF 303099) (Mesorhizobium loti (strain MAFF 303099))).